The primary structure comprises 265 residues: Lipopolysaccharide core heptose(I) kinase WaaP (265 aa).

Residue Asp-162 is part of the active site.

It belongs to the protein kinase superfamily. KdkA/RfaP family. Requires Mg(2+) as cofactor.

It catalyses the reaction an L-alpha-D-Hep-(1-&gt;3)-L-alpha-D-Hep-(1-&gt;5)-[alpha-Kdo-(2-&gt;4)]-alpha-Kdo-(2-&gt;6)-lipid A + ATP = an L-alpha-D-Hep-(1-&gt;3)-4-O-phospho-L-alpha-D-Hep-(1-&gt;5)-[alpha-Kdo-(2-&gt;4)]-alpha-Kdo-(2-&gt;6)-lipid A + ADP + H(+). It carries out the reaction L-alpha-D-Hep-(1-&gt;3)-L-alpha-D-Hep-(1-&gt;5)-[alpha-Kdo-(2-&gt;4)]-alpha-Kdo-(2-&gt;6)-lipid A (E. coli) + ATP = L-alpha-D-Hep-(1-&gt;3)-4-O-phospho-L-alpha-D-Hep-(1-&gt;5)-[alpha-Kdo-(2-&gt;4)]-alpha-Kdo-(2-&gt;6)-lipid A (E. coli) + ADP + H(+). It functions in the pathway bacterial outer membrane biogenesis; LPS core biosynthesis. Kinase involved in the biosynthesis of the core oligosaccharide region of lipopolysaccharide (LPS). Catalyzes the phosphorylation of heptose I (HepI), the first heptose added to the Kdo2-lipid A module. In Escherichia coli (strain K12), this protein is Lipopolysaccharide core heptose(I) kinase WaaP.